The sequence spans 462 residues: Argininosuccinate lyase (462 aa).

It belongs to the lyase 1 family. Argininosuccinate lyase subfamily.

It is found in the cytoplasm. It carries out the reaction 2-(N(omega)-L-arginino)succinate = fumarate + L-arginine. It participates in amino-acid biosynthesis; L-arginine biosynthesis; L-arginine from L-ornithine and carbamoyl phosphate: step 3/3. The polypeptide is Argininosuccinate lyase (Methylobacterium nodulans (strain LMG 21967 / CNCM I-2342 / ORS 2060)).